The chain runs to 161 residues: Nucleotide-binding protein amb3630 (161 aa).

This sequence belongs to the YajQ family.

Functionally, nucleotide-binding protein. This is Nucleotide-binding protein amb3630 from Paramagnetospirillum magneticum (strain ATCC 700264 / AMB-1) (Magnetospirillum magneticum).